The sequence spans 254 residues: Pimeloyl-[acyl-carrier protein] methyl ester esterase (254 aa).

One can recognise an AB hydrolase-1 domain in the interval 14–242; it reads LVLLHGWGMN…ASHAPFISHP (229 aa). Substrate contacts are provided by residues Trp20, 82–83, and 143–147; these read SL and FLAIQ. Ser82 (nucleophile) is an active-site residue. Residues Asp207 and His235 contribute to the active site. Substrate is bound at residue His235.

This sequence belongs to the AB hydrolase superfamily. Carboxylesterase BioH family. Monomer.

It localises to the cytoplasm. It carries out the reaction 6-carboxyhexanoyl-[ACP] methyl ester + H2O = 6-carboxyhexanoyl-[ACP] + methanol + H(+). The protein operates within cofactor biosynthesis; biotin biosynthesis. The physiological role of BioH is to remove the methyl group introduced by BioC when the pimeloyl moiety is complete. It allows to synthesize pimeloyl-ACP via the fatty acid synthetic pathway through the hydrolysis of the ester bonds of pimeloyl-ACP esters. This chain is Pimeloyl-[acyl-carrier protein] methyl ester esterase, found in Aeromonas salmonicida (strain A449).